Here is an 87-residue protein sequence, read N- to C-terminus: Small ribosomal subunit protein uS15 (87 aa).

It belongs to the universal ribosomal protein uS15 family. In terms of assembly, part of the 30S ribosomal subunit. Forms a bridge to the 50S subunit in the 70S ribosome, contacting the 23S rRNA.

In terms of biological role, one of the primary rRNA binding proteins, it binds directly to 16S rRNA where it helps nucleate assembly of the platform of the 30S subunit by binding and bridging several RNA helices of the 16S rRNA. Its function is as follows. Forms an intersubunit bridge (bridge B4) with the 23S rRNA of the 50S subunit in the ribosome. The sequence is that of Small ribosomal subunit protein uS15 from Clostridium botulinum (strain Eklund 17B / Type B).